The chain runs to 673 residues: G-protein-signaling modulator 1 (673 aa).

The tract at residues 1-507 (MASPAPPVAE…DLLSKFQSSR (507 aa)) is mediates association with membranes. TPR repeat units lie at residues 28 to 61 (CLEL…GTED), 66 to 99 (SAIY…ARTI), 106 to 139 (AKAS…AQEQ), 146 to 178 (ARAL…PPDV), 180 to 199 (ETLH…VKEL), 206 to 239 (GRAY…AKEF), 246 to 279 (RRAY…SRQL), 286 to 319 (AQAC…AQEL), and 326 to 359 (GRAC…SQEI). An interaction with STK11/LKB1 region spans residues 361 to 485 (DRNGELTARM…VRVQVPRTGI (125 aa)). Serine 410 carries the post-translational modification Phosphoserine. Arginine 418 carries the post-translational modification Omega-N-methylarginine. A compositionally biased stretch (basic and acidic residues) spans 420 to 439 (PLDREQNGETHHTGDWRGPG). The interval 420 to 475 (PLDREQNGETHHTGDWRGPGRDSLPLPMRSRKYQEGPDAIERRPREGSHSPLDSAD) is disordered. A phosphoserine mark is found at serine 442, serine 467, serine 469, serine 490, and serine 491. Over residues 451–467 (KYQEGPDAIERRPREGS) the composition is skewed to basic and acidic residues. Residues 493–515 (EECFFDLLSKFQSSRMDDQRCPL) enclose the GoLoco 1 domain. Residues 508 to 531 (MDDQRCPLEEGQAGAAEATAAPSV) form a disordered region. Residues 516-528 (EEGQAGAAEATAA) are compositionally biased toward low complexity. A phosphoserine mark is found at serine 543 and serine 567. GoLoco domains are found at residues 546–568 (TEEF…RASV), 594–616 (GDEF…RCPP), and 628–650 (DEDF…RVDL). The interval 644–673 (DEQRVDLAGSPEQEASGLPDPQQQCPPGAS) is disordered. A Phosphoserine modification is found at serine 653. Over residues 664–673 (PQQQCPPGAS) the composition is skewed to polar residues.

The protein belongs to the GPSM family. Interacts with GNAI1 and GNAI2 preferentially in their GDP-bound state. May also interact with GNAO1. Interacts with INSC/inscuteable and FRMPD1. Interacts with GNAI3. Interacts with STK11/LKB1 and MACF1. Phosphorylation regulates interaction with G(i/o) alpha. As to expression, expressed in neural progenitor cells (at protein level).

Its subcellular location is the cytoplasm. It localises to the cytosol. The protein resides in the endoplasmic reticulum membrane. It is found in the golgi apparatus membrane. The protein localises to the cell membrane. Functionally, guanine nucleotide dissociation inhibitor (GDI) which functions as a receptor-independent activator of heterotrimeric G-protein signaling. Keeps G(i/o) alpha subunit in its GDP-bound form thus uncoupling heterotrimeric G-proteins signaling from G protein-coupled receptors. Controls spindle orientation and asymmetric cell fate of cerebral cortical progenitors. May also be involved in macroautophagy in intestinal cells. May play a role in drug addiction. The sequence is that of G-protein-signaling modulator 1 (Gpsm1) from Mus musculus (Mouse).